A 348-amino-acid chain; its full sequence is ECA polysaccharide chain length modulation protein (348 aa).

The next 2 helical transmembrane spans lie at 31–51 (FWII…TFFA) and 323–343 (AFLM…VALT).

It belongs to the WzzB/Cld/Rol family. Probably part of a complex composed of WzxE, WzyE and WzzE.

It localises to the cell inner membrane. It participates in bacterial outer membrane biogenesis; enterobacterial common antigen biosynthesis. Functionally, modulates the polysaccharide chain length of enterobacterial common antigen (ECA). The sequence is that of ECA polysaccharide chain length modulation protein from Salmonella typhimurium (strain LT2 / SGSC1412 / ATCC 700720).